We begin with the raw amino-acid sequence, 358 residues long: Uptake hydrogenase small subunit (358 aa).

Residues 1 to 45 (MSDIETFYDVMRRQGITRRSFMKSVRSPQHVLGLGPSFVPKIGEA) form the signal peptide. [4Fe-4S] cluster is bound by residues Cys62, Cys65, Cys160, Cys194, His232, Cys235, Cys260, and Cys266. Residues Cys275, Cys294, and Cys297 each contribute to the [3Fe-4S] cluster site.

Belongs to the [NiFe]/[NiFeSe] hydrogenase small subunit family. Heterodimer of a large and a small subunit. It depends on [4Fe-4S] cluster as a cofactor. The cofactor is [3Fe-4S] cluster.

Its subcellular location is the cell membrane. It catalyses the reaction H2 + A = AH2. In terms of biological role, this enzyme recycles the H(2) produced by nitrogenase to increase the production of ATP and to protect nitrogenase against inhibition or damage by O(2) under carbon- or phosphate-limited conditions. The sequence is that of Uptake hydrogenase small subunit (hupA) from Rhodobacter capsulatus (Rhodopseudomonas capsulata).